The sequence spans 340 residues: Solute-binding protein Dde_0634 (340 aa).

A signal peptide spans 1–29; it reads MKSTFAALLIMVGCLVSGALLTGSEAAAA. Residues Tyr-99, Arg-172, 210-213, and Tyr-235 contribute to the (indol-3-yl)acetate site; that span reads TSLD.

Belongs to the bacterial solute-binding protein 7 family. As to quaternary structure, the complex is comprised of an extracytoplasmic solute-binding protein and a heteromeric permease formed by two transmembrane proteins.

The protein localises to the periplasm. Functionally, solute-binding protein that binds indole-3-pyruvate and indole-3-acetate (in vitro). Can also bind D-tryptophan (in vitro), but that is probably not a physiological ligand. Probably part of a tripartite ATP-independent periplasmic (TRAP) transport system that mediates solute transport into the cytoplasm. In Oleidesulfovibrio alaskensis (strain ATCC BAA-1058 / DSM 17464 / G20) (Desulfovibrio alaskensis), this protein is Solute-binding protein Dde_0634.